We begin with the raw amino-acid sequence, 317 residues long: Olfactory receptor 2T27 (317 aa).

At 1 to 22 (MEQSNYSVYADFILLGLFSNAR) the chain is on the extracellular side. The N-linked (GlcNAc...) asparagine glycan is linked to Asn-5. The helical transmembrane segment at 23–43 (FPWLLFALILLVFLTSIASNV) threads the bilayer. Over 44–60 (VKIILIHIDSRLHTPMY) the chain is Cytoplasmic. Residues 61-83 (FLLSQLSLRDILYISTIVPKMLV) form a helical membrane-spanning segment. Over 84–97 (DQVMSQRAISFAGC) the chain is Extracellular. Cys-97 and Cys-189 are joined by a disulfide. Residues 98-118 (TAQHFLYLTLAGAEFFLLGLM) traverse the membrane as a helical segment. At 119-139 (SYDRYVAICNPLHYPVLMSRK) the chain is on the cytoplasmic side. Residues 140–160 (ICWLIVAAAWLGGSIDGFLLT) form a helical membrane-spanning segment. Over 161 to 197 (PVTMQFPFCASREINHFFCEVPALLKLSCTDTSAYET) the chain is Extracellular. Residues 198–218 (AMYVCCIMMLLIPFSVISGSY) form a helical membrane-spanning segment. The Cytoplasmic segment spans residues 219–244 (TRILITVYRMSEAEGRGKAVATCSSH). Residues 245–265 (MVVVSLFYGAAMYTYVLPHSY) traverse the membrane as a helical segment. Topologically, residues 266-271 (HTPEQD) are extracellular. Residues 272–292 (KAVSAFYTILTPMLNPLIYSL) form a helical membrane-spanning segment. The Cytoplasmic portion of the chain corresponds to 293–317 (RNKDVTGALQKVVGRCVSSGKVTTF).

The protein belongs to the G-protein coupled receptor 1 family.

Its subcellular location is the cell membrane. In terms of biological role, odorant receptor. The sequence is that of Olfactory receptor 2T27 (OR2T27) from Homo sapiens (Human).